The following is a 120-amino-acid chain: UPF0091 protein PH1455 (120 aa).

It belongs to the UPF0091 family.

In Pyrococcus horikoshii (strain ATCC 700860 / DSM 12428 / JCM 9974 / NBRC 100139 / OT-3), this protein is UPF0091 protein PH1455.